The primary structure comprises 150 residues: D-aminoacyl-tRNA deacylase (150 aa).

A Gly-cisPro motif, important for rejection of L-amino acids motif is present at residues 138–139; sequence GP.

Belongs to the DTD family. As to quaternary structure, homodimer.

The protein resides in the cytoplasm. It carries out the reaction glycyl-tRNA(Ala) + H2O = tRNA(Ala) + glycine + H(+). The catalysed reaction is a D-aminoacyl-tRNA + H2O = a tRNA + a D-alpha-amino acid + H(+). Functionally, an aminoacyl-tRNA editing enzyme that deacylates mischarged D-aminoacyl-tRNAs. Also deacylates mischarged glycyl-tRNA(Ala), protecting cells against glycine mischarging by AlaRS. Acts via tRNA-based rather than protein-based catalysis; rejects L-amino acids rather than detecting D-amino acids in the active site. By recycling D-aminoacyl-tRNA to D-amino acids and free tRNA molecules, this enzyme counteracts the toxicity associated with the formation of D-aminoacyl-tRNA entities in vivo and helps enforce protein L-homochirality. In Flavobacterium johnsoniae (strain ATCC 17061 / DSM 2064 / JCM 8514 / BCRC 14874 / CCUG 350202 / NBRC 14942 / NCIMB 11054 / UW101) (Cytophaga johnsonae), this protein is D-aminoacyl-tRNA deacylase.